The chain runs to 297 residues: Probable endonuclease 4 (297 aa).

9 residues coordinate Zn(2+): histidine 68, histidine 109, glutamate 144, aspartate 178, histidine 181, histidine 213, aspartate 226, histidine 228, and glutamate 258.

It belongs to the AP endonuclease 2 family. It depends on Zn(2+) as a cofactor.

It catalyses the reaction Endonucleolytic cleavage to 5'-phosphooligonucleotide end-products.. In terms of biological role, endonuclease IV plays a role in DNA repair. It cleaves phosphodiester bonds at apurinic or apyrimidinic (AP) sites, generating a 3'-hydroxyl group and a 5'-terminal sugar phosphate. This is Probable endonuclease 4 from Lysinibacillus sphaericus (strain C3-41).